The primary structure comprises 57 residues: Preprotein translocase subunit SecG (57 aa).

Topologically, residues 1–33 are cytoplasmic; it reads MPSSKKKKENVPVMSMAGLIRYYEEEHEKYKVD. A helical membrane pass occupies residues 34–55; that stretch reads PIYVIIASIVLVAVVVAVTKII. Residues 56-57 are Extracellular-facing; sequence PP.

Belongs to the SEC61-beta family. As to quaternary structure, component of the protein translocase complex. Heterotrimer consisting of alpha (SecY), beta (SecG) and gamma (SecE) subunits. Can form oligomers of the heterotrimer.

It is found in the cell membrane. Functionally, involved in protein export. The function of the beta subunit is unknown, but it may be involved in stabilization of the trimeric complex. In Metallosphaera sedula (strain ATCC 51363 / DSM 5348 / JCM 9185 / NBRC 15509 / TH2), this protein is Preprotein translocase subunit SecG.